A 319-amino-acid polypeptide reads, in one-letter code: RNA exonuclease 4 (319 aa).

The segment at Met-1–Glu-75 is disordered. The Exonuclease domain maps to Lys-132–Val-293. A disordered region spans residues His-295–Lys-319.

It belongs to the REXO4 family.

The protein resides in the nucleus. In terms of biological role, exoribonuclease involved in ribosome biosynthesis. Involved in the processing of ITS1, the internal transcribed spacer localized between the 18S and 5.8S rRNAs. The polypeptide is RNA exonuclease 4 (REX4) (Gibberella zeae (strain ATCC MYA-4620 / CBS 123657 / FGSC 9075 / NRRL 31084 / PH-1) (Wheat head blight fungus)).